The following is a 209-amino-acid chain: MEILPKYKPEEILAIIHTHPKGPAEPSINDLLMARHVLTNNKNTIHGVLAENDGKLQLIMYNYWTIDGSKLAKMLSRFLDNGVKPPREEKLKVAHAYVTNIEDFDVSKIPEIADHFALWRYYWLIDTSDLFVFDPSNIDIYKKLKEKALFIPTGRDEGWLVLGVDTSGAEPIVYKVKECKDKVTLRSTGHEFSPIIVEWCKEKPMCRVA.

The region spanning 1–67 (MEILPKYKPE…LIMYNYWTID (67 aa)) is the MPN domain. Zn(2+) contacts are provided by His-17, His-19, and Asp-30. The short motif at 17 to 30 (HTHPKGPAEPSIND) is the JAMM motif element.

This is an uncharacterized protein from Acidianus convivator (ATV).